A 134-amino-acid polypeptide reads, in one-letter code: Isocitrate dehydrogenase [NAD] subunit alpha, mitochondrial (134 aa).

Lys37 is modified (N6-succinyllysine). A Phosphothreonine modification is found at Thr50. 3 residues coordinate substrate: Arg64, Arg74, and Arg95.

This sequence belongs to the isocitrate and isopropylmalate dehydrogenases family. Heterooligomer of subunits alpha (IDH3A), beta (IDH3B), and gamma (IDH3G) in the apparent ratio of 2:1:1. The heterodimer containing one IDH3A and one IDH3B subunit and the heterodimer containing one IDH3A and one IDH3G subunit assemble into a heterotetramer (which contains two subunits of IDH3A, one of IDH3B and one of IDH3G) and further into the heterooctamer. It depends on Mg(2+) as a cofactor. Mn(2+) is required as a cofactor.

The protein localises to the mitochondrion. It carries out the reaction D-threo-isocitrate + NAD(+) = 2-oxoglutarate + CO2 + NADH. Its activity is regulated as follows. The heterotetramer and the heterodimer composed of IDH3A and IDH3G subunits can be allosterically activated by citrate (CIT) or/and ADP, and the two activators can act independently or synergistically. The heterodimer composed of IDH3A and IDH3B subunits cannot be allosterically regulated and the allosteric regulation of the heterotetramer is through the IDH3G subunit and not the IDH3B subunit. The IDH3G subunit contains the allosteric site which consists of a CIT-binding site and an ADP-binding site, and the binding of CIT and ADP causes conformational changes at the allosteric site which are transmitted to the active site in the catalytic subunit (IDH3A) through a cascade of conformational changes at the heterodimer interface, leading to stabilization of the isocitrate-binding at the active site and thus activation of the enzyme. ATP can activate the heterotetramer and the heterodimer composed of IDH3A and IDH3G subunits at low concentrations but inhibits their activities at high concentrations, whereas ATP exhibits only inhibitory effect on the heterodimer composed of IDH3A and IDH3B subunits. Functionally, catalytic subunit of the enzyme which catalyzes the decarboxylation of isocitrate (ICT) into alpha-ketoglutarate. The heterodimer composed of the alpha (IDH3A) and beta (IDH3B) subunits and the heterodimer composed of the alpha (IDH3A) and gamma (IDH3G) subunits, have considerable basal activity but the full activity of the heterotetramer (containing two subunits of IDH3A, one of IDH3B and one of IDH3G) requires the assembly and cooperative function of both heterodimers. This is Isocitrate dehydrogenase [NAD] subunit alpha, mitochondrial from Mesocricetus auratus (Golden hamster).